We begin with the raw amino-acid sequence, 104 residues long: Flagellar hook-basal body complex protein FliE (104 aa).

Belongs to the FliE family.

It is found in the bacterial flagellum basal body. This is Flagellar hook-basal body complex protein FliE from Salmonella newport (strain SL254).